A 366-amino-acid polypeptide reads, in one-letter code: MSKLRVAIIFGGKSTEHQVSLQSAKNIINELDRTKFDLCLIGINEQGQWHEYAEDNYLINSDNPSTISLSQPLRPVAIIPGSTRQQFISLTDGQPLAQIDVVFPIVHGAYGEDGTLQGLLHMIDMPYVGPNIMSSAACMDKDITKRLLDDAGLAVAPFITLMAHQLNDISYNEVVEQLGLPLFIKPANLGSSVGISKVNNEAEFNAALSMAFEYDLKVIIESAIVGREIECAVLGNEEPEVSPCGEIVLNDAFYAYNTKYIDDDGAKVVVPADLDNAISLHIRQTALKAYQVLNCLGMSRVDVFLTEDNQVIINEINTLPGFTNISMYPKLWQSTGLDYQSLITKLIELALEHHKKTAVLKTKCEL.

Residues 145-348 (KRLLDDAGLA…YQSLITKLIE (204 aa)) enclose the ATP-grasp domain. An ATP-binding site is contributed by 175–230 (VEQLGLPLFIKPANLGSSVGISKVNNEAEFNAALSMAFEYDLKVIIESAIVGREIE). Residues Asp-302, Glu-315, and Asn-317 each coordinate Mg(2+).

The protein belongs to the D-alanine--D-alanine ligase family. Mg(2+) serves as cofactor. Mn(2+) is required as a cofactor.

The protein resides in the cytoplasm. It carries out the reaction 2 D-alanine + ATP = D-alanyl-D-alanine + ADP + phosphate + H(+). The protein operates within cell wall biogenesis; peptidoglycan biosynthesis. Its function is as follows. Cell wall formation. This is D-alanine--D-alanine ligase from Proteus mirabilis (strain HI4320).